The sequence spans 398 residues: MSKTIAINAGSSSLKWQLYQMPEEEVLAQGIIERIGLKDSISTVKYDGKKEEQILDIHDHTEAVKILLNDLIHFGIIAAYDEITGVGHRVVAGGELFKESVVVNDKVLEHIEELSVLAPLHNPGAAAGIRAFRDILPDITSVCVFDTSFHTSMAKHTYLYPIPQKYYTDYKVRKYGAHGTSHKYVAQEAAKMLGRPLEELKLITAHIGNGVSITANYHGKSVDTSMGFTPLAGPMMGTRSGDIDPAIIPYLIEQDPELKDAADVVNMLNKKSGLSGVSGISSDMRDIEAGLQEDNPDAVLAYNIFIDRIKKYIGQYFAVLNGADALVFTAGMGENAPLMRQDVIGGLTWFGMDIDPEKNVFGYRGDISTPESKVKVLVISTDEELCIARDVERLKNTK.

Residue asparagine 8 coordinates Mg(2+). Residue lysine 15 participates in ATP binding. Residue arginine 89 coordinates substrate. Catalysis depends on aspartate 146, which acts as the Proton donor/acceptor. Residues 206–210 (HIGNG), 283–285 (DMR), and 331–335 (GMGEN) contribute to the ATP site. Glutamate 383 is a binding site for Mg(2+).

It belongs to the acetokinase family. Homodimer. It depends on Mg(2+) as a cofactor. Requires Mn(2+) as cofactor.

It localises to the cytoplasm. It carries out the reaction acetate + ATP = acetyl phosphate + ADP. Its pathway is metabolic intermediate biosynthesis; acetyl-CoA biosynthesis; acetyl-CoA from acetate: step 1/2. Functionally, catalyzes the formation of acetyl phosphate from acetate and ATP. Can also catalyze the reverse reaction. The sequence is that of Acetate kinase from Streptococcus pyogenes serotype M5 (strain Manfredo).